A 189-amino-acid polypeptide reads, in one-letter code: Threonylcarbamoyl-AMP synthase (189 aa).

A YrdC-like domain is found at 6-189 (TAIFTPIIDA…VLTGEQIRQG (184 aa)).

The protein belongs to the SUA5 family. TsaC subfamily.

The protein localises to the cytoplasm. It carries out the reaction L-threonine + hydrogencarbonate + ATP = L-threonylcarbamoyladenylate + diphosphate + H2O. In terms of biological role, required for the formation of a threonylcarbamoyl group on adenosine at position 37 (t(6)A37) in tRNAs that read codons beginning with adenine. Catalyzes the conversion of L-threonine, HCO(3)(-)/CO(2) and ATP to give threonylcarbamoyl-AMP (TC-AMP) as the acyladenylate intermediate, with the release of diphosphate. The sequence is that of Threonylcarbamoyl-AMP synthase from Serratia proteamaculans (strain 568).